The primary structure comprises 264 residues: Tryptophan synthase alpha chain (264 aa).

Residues glutamate 49 and aspartate 60 each act as proton acceptor in the active site.

The protein belongs to the TrpA family. Tetramer of two alpha and two beta chains.

The catalysed reaction is (1S,2R)-1-C-(indol-3-yl)glycerol 3-phosphate + L-serine = D-glyceraldehyde 3-phosphate + L-tryptophan + H2O. It participates in amino-acid biosynthesis; L-tryptophan biosynthesis; L-tryptophan from chorismate: step 5/5. The alpha subunit is responsible for the aldol cleavage of indoleglycerol phosphate to indole and glyceraldehyde 3-phosphate. The chain is Tryptophan synthase alpha chain from Lachnospira eligens (strain ATCC 27750 / DSM 3376 / VPI C15-48 / C15-B4) (Eubacterium eligens).